Here is an 87-residue protein sequence, read N- to C-terminus: Large ribosomal subunit protein eL33 (87 aa).

Belongs to the eukaryotic ribosomal protein eL33 family.

The chain is Large ribosomal subunit protein eL33 from Pyrococcus woesei.